A 938-amino-acid polypeptide reads, in one-letter code: MDSAFFNEVAKKWQEKWENNKVFEANPSNSEKYFITVAFPYTNSPLHIGHGRTYITADIVARYQRMIGKNVLFPFAFQFTGTPILSISESIKRGDSDIISDFINLYKISPEKVREFEDPLKLAEYFKEDMKRMAKALGLSVDWRREFTTIDPRFGQFIKWQFRKLKEKGFITTATDAVGYCPNDNFPVGMHDTKGDVEPEVQEMDVIEFEGNDVVFPTATSRPETVFGANAVLINPEATYVLIRGSNWVLSKEAFRKLSYQRELVPEREVQGKDLIGLTVKNPISGKDVKVYGSKFVDAKMGTGSVMAVPAHEPLHYLGLSEVLSEVEVIPVISTEGYGDFPGPEVLALAGTKNPAELKDYIDTLYREEYYKGVMREDIVDLVPDYMRSIVKDRIAGKRVPEARRETVELLRSLGKHDLIYEISNGPIYCRCGAEIVVKVIRDQWYITYDNPLWKSWTMKALDRISIVPEEARRDMAKAIFSMKRRACSRSRGLGVKLPWDESQIIDSLSDSTIYTGFYTVAHKLSHDPSKLNDQFWDFVLLGNGDASEVSKVTGISVEELKDLRNEFSYWYPLDSRHSGRDLVQNHLPFLIYNHLAIFGESLLPRQIVINGFVRVGGKKMSKSFRNIYPLYKAVEEYGVDPVRLALTISSELLEDTDFDVNTVKAVTDQLRRMYDLAVNLSKLRENESTGLPEKWLLSIIHYKVKEVSDLMNSLDLRKAFNIILYEYYEILRDYLSMVSNPNTSVLRKAIEIWARLISPGAPHIAEEIWHIFNEGFVSLTRYPVPEELEVDGQAVIQLEYIRHLINQVKEISSMANKQPEKLIIYVSNSDELGILRAVLRGLKERKNLRELSSITGQREEYLRSLVERVQSLPPILRELIVTYPLDEFKTITDNLNFLVRRLDVDEIQVYRSDEANAPDIKGKKSNALPLLPGIVII.

The 'HIGH' region motif lies at 40-50 (PYTNSPLHIGH). The 'KMSKS' region signature appears at 620-624 (KMSKS). Lys-623 lines the ATP pocket.

Belongs to the class-I aminoacyl-tRNA synthetase family.

The protein localises to the cytoplasm. It carries out the reaction tRNA(Leu) + L-leucine + ATP = L-leucyl-tRNA(Leu) + AMP + diphosphate. The protein is Leucine--tRNA ligase 1 of Metallosphaera sedula (strain ATCC 51363 / DSM 5348 / JCM 9185 / NBRC 15509 / TH2).